A 753-amino-acid polypeptide reads, in one-letter code: 5-methyltetrahydropteroyltriglutamate--homocysteine methyltransferase (753 aa).

5-methyltetrahydropteroyltri-L-glutamate-binding positions include arginine 17–lysine 20 and lysine 117. Residues isoleucine 431–serine 433 and glutamate 484 contribute to the L-homocysteine site. L-methionine-binding positions include isoleucine 431–serine 433 and glutamate 484. Residues arginine 515–cysteine 516 and tryptophan 561 each bind 5-methyltetrahydropteroyltri-L-glutamate. Aspartate 599 provides a ligand contact to L-homocysteine. Aspartate 599 serves as a coordination point for L-methionine. 5-methyltetrahydropteroyltri-L-glutamate is bound at residue glutamate 605. Zn(2+) contacts are provided by histidine 641, cysteine 643, and glutamate 665. Catalysis depends on histidine 694, which acts as the Proton donor. Cysteine 726 lines the Zn(2+) pocket.

Belongs to the vitamin-B12 independent methionine synthase family. Zn(2+) is required as a cofactor.

The catalysed reaction is 5-methyltetrahydropteroyltri-L-glutamate + L-homocysteine = tetrahydropteroyltri-L-glutamate + L-methionine. Its pathway is amino-acid biosynthesis; L-methionine biosynthesis via de novo pathway; L-methionine from L-homocysteine (MetE route): step 1/1. Catalyzes the transfer of a methyl group from 5-methyltetrahydrofolate to homocysteine resulting in methionine formation. This chain is 5-methyltetrahydropteroyltriglutamate--homocysteine methyltransferase, found in Shigella flexneri serotype 5b (strain 8401).